Here is a 111-residue protein sequence, read N- to C-terminus: Large ribosomal subunit protein uL22 (111 aa).

The protein belongs to the universal ribosomal protein uL22 family. In terms of assembly, part of the 50S ribosomal subunit.

Functionally, this protein binds specifically to 23S rRNA; its binding is stimulated by other ribosomal proteins, e.g. L4, L17, and L20. It is important during the early stages of 50S assembly. It makes multiple contacts with different domains of the 23S rRNA in the assembled 50S subunit and ribosome. The globular domain of the protein is located near the polypeptide exit tunnel on the outside of the subunit, while an extended beta-hairpin is found that lines the wall of the exit tunnel in the center of the 70S ribosome. The chain is Large ribosomal subunit protein uL22 from Xanthomonas euvesicatoria pv. vesicatoria (strain 85-10) (Xanthomonas campestris pv. vesicatoria).